The following is a 533-amino-acid chain: Peptide chain release factor 3 (533 aa).

The 274-residue stretch at 11-284 (RRRRTFAIIS…ALVGLSPEPL (274 aa)) folds into the tr-type G domain. GTP is bound by residues 20 to 27 (SHPDAGKT), 92 to 96 (DTPGH), and 146 to 149 (NKLD).

It belongs to the TRAFAC class translation factor GTPase superfamily. Classic translation factor GTPase family. PrfC subfamily.

It is found in the cytoplasm. Increases the formation of ribosomal termination complexes and stimulates activities of RF-1 and RF-2. It binds guanine nucleotides and has strong preference for UGA stop codons. It may interact directly with the ribosome. The stimulation of RF-1 and RF-2 is significantly reduced by GTP and GDP, but not by GMP. The chain is Peptide chain release factor 3 from Ralstonia nicotianae (strain ATCC BAA-1114 / GMI1000) (Ralstonia solanacearum).